Here is a 399-residue protein sequence, read N- to C-terminus: S-adenosylmethionine synthase (399 aa).

ATP is bound at residue His-17. Residue Asp-19 coordinates Mg(2+). Glu-45 serves as a coordination point for K(+). The L-methionine site is built by Glu-58 and Gln-101. Residues 101–111 (QSPDIAQGVDE) form a flexible loop region. Residues 177 to 179 (DAK), 244 to 245 (RF), Asp-253, 259 to 260 (RK), Ala-276, and Lys-280 contribute to the ATP site. Asp-253 contributes to the L-methionine binding site. Lys-284 is a binding site for L-methionine.

This sequence belongs to the AdoMet synthase family. In terms of assembly, homotetramer; dimer of dimers. Requires Mg(2+) as cofactor. It depends on K(+) as a cofactor.

Its subcellular location is the cytoplasm. It catalyses the reaction L-methionine + ATP + H2O = S-adenosyl-L-methionine + phosphate + diphosphate. It participates in amino-acid biosynthesis; S-adenosyl-L-methionine biosynthesis; S-adenosyl-L-methionine from L-methionine: step 1/1. Its function is as follows. Catalyzes the formation of S-adenosylmethionine (AdoMet) from methionine and ATP. The overall synthetic reaction is composed of two sequential steps, AdoMet formation and the subsequent tripolyphosphate hydrolysis which occurs prior to release of AdoMet from the enzyme. This is S-adenosylmethionine synthase from Listeria welshimeri serovar 6b (strain ATCC 35897 / DSM 20650 / CCUG 15529 / CIP 8149 / NCTC 11857 / SLCC 5334 / V8).